The primary structure comprises 113 residues: Nucleoid-associated protein Athe_1143 (113 aa).

It belongs to the YbaB/EbfC family. As to quaternary structure, homodimer.

The protein localises to the cytoplasm. Its subcellular location is the nucleoid. Its function is as follows. Binds to DNA and alters its conformation. May be involved in regulation of gene expression, nucleoid organization and DNA protection. The sequence is that of Nucleoid-associated protein Athe_1143 from Caldicellulosiruptor bescii (strain ATCC BAA-1888 / DSM 6725 / KCTC 15123 / Z-1320) (Anaerocellum thermophilum).